A 508-amino-acid polypeptide reads, in one-letter code: Photosystem II CP47 reaction center protein (508 aa).

The next 6 membrane-spanning stretches (helical) occupy residues 21 to 36 (SVHI…WAGS), 101 to 115 (IVFS…IWHW), 140 to 156 (GIHL…FGAF), 203 to 218 (IAAG…FHLS), 237 to 252 (VLSS…AFVV), and 457 to 472 (SFAL…HGAR).

This sequence belongs to the PsbB/PsbC family. PsbB subfamily. PSII is composed of 1 copy each of membrane proteins PsbA, PsbB, PsbC, PsbD, PsbE, PsbF, PsbH, PsbI, PsbJ, PsbK, PsbL, PsbM, PsbT, PsbX, PsbY, PsbZ, Psb30/Ycf12, at least 3 peripheral proteins of the oxygen-evolving complex and a large number of cofactors. It forms dimeric complexes. The cofactor is Binds multiple chlorophylls. PSII binds additional chlorophylls, carotenoids and specific lipids..

It localises to the plastid. The protein resides in the chloroplast thylakoid membrane. One of the components of the core complex of photosystem II (PSII). It binds chlorophyll and helps catalyze the primary light-induced photochemical processes of PSII. PSII is a light-driven water:plastoquinone oxidoreductase, using light energy to abstract electrons from H(2)O, generating O(2) and a proton gradient subsequently used for ATP formation. The polypeptide is Photosystem II CP47 reaction center protein (Gossypium hirsutum (Upland cotton)).